A 93-amino-acid chain; its full sequence is Small ribosomal subunit protein uS19 (93 aa).

The disordered stretch occupies residues 73 to 93; it reads EFSPTRTFRGHVKDDRKSKRR. Residues 83–93 are compositionally biased toward basic and acidic residues; sequence HVKDDRKSKRR.

This sequence belongs to the universal ribosomal protein uS19 family.

Its function is as follows. Protein S19 forms a complex with S13 that binds strongly to the 16S ribosomal RNA. The sequence is that of Small ribosomal subunit protein uS19 from Streptomyces coelicolor (strain ATCC BAA-471 / A3(2) / M145).